The sequence spans 565 residues: Proline--tRNA ligase (565 aa).

It belongs to the class-II aminoacyl-tRNA synthetase family. ProS type 1 subfamily. In terms of assembly, homodimer.

It is found in the cytoplasm. The enzyme catalyses tRNA(Pro) + L-proline + ATP = L-prolyl-tRNA(Pro) + AMP + diphosphate. In terms of biological role, catalyzes the attachment of proline to tRNA(Pro) in a two-step reaction: proline is first activated by ATP to form Pro-AMP and then transferred to the acceptor end of tRNA(Pro). As ProRS can inadvertently accommodate and process non-cognate amino acids such as alanine and cysteine, to avoid such errors it has two additional distinct editing activities against alanine. One activity is designated as 'pretransfer' editing and involves the tRNA(Pro)-independent hydrolysis of activated Ala-AMP. The other activity is designated 'posttransfer' editing and involves deacylation of mischarged Ala-tRNA(Pro). The misacylated Cys-tRNA(Pro) is not edited by ProRS. The protein is Proline--tRNA ligase of Francisella tularensis subsp. holarctica (strain FTNF002-00 / FTA).